The primary structure comprises 619 residues: Chaperone protein HscA homolog (619 aa).

This sequence belongs to the heat shock protein 70 family.

Its function is as follows. Chaperone involved in the maturation of iron-sulfur cluster-containing proteins. Has a low intrinsic ATPase activity which is markedly stimulated by HscB. The protein is Chaperone protein HscA homolog of Pseudomonas aeruginosa (strain LESB58).